A 1465-amino-acid polypeptide reads, in one-letter code: DNA polymerase III polC-type (1465 aa).

The 157-residue stretch at 427-583 (YVVFDVETTG…YDAEATGRLL (157 aa)) folds into the Exonuclease domain.

Belongs to the DNA polymerase type-C family. PolC subfamily.

Its subcellular location is the cytoplasm. It catalyses the reaction DNA(n) + a 2'-deoxyribonucleoside 5'-triphosphate = DNA(n+1) + diphosphate. Required for replicative DNA synthesis. This DNA polymerase also exhibits 3' to 5' exonuclease activity. In Streptococcus pyogenes serotype M3 (strain ATCC BAA-595 / MGAS315), this protein is DNA polymerase III polC-type.